The chain runs to 65 residues: Large ribosomal subunit protein bL35 (65 aa).

The interval 1–21 is disordered; that stretch reads MPKMKTKSGAAKRFTVRAGGT.

The protein belongs to the bacterial ribosomal protein bL35 family.

This chain is Large ribosomal subunit protein bL35, found in Nitrosospira multiformis (strain ATCC 25196 / NCIMB 11849 / C 71).